Consider the following 912-residue polypeptide: Eukaryotic translation initiation factor 3 subunit C (912 aa).

The disordered stretch occupies residues 1-44 (MSRFFTTGSDSESESSLSGEELVTKPVGGNYGKQPLLLSEDEED). Residues 8-21 (GSDSESESSLSGEE) are compositionally biased toward low complexity. A phosphoserine mark is found at serine 9, serine 11, serine 13, serine 15, serine 16, serine 18, and serine 39. An N6-acetyllysine modification is found at lysine 99. Disordered stretches follow at residues 157–305 (TNYK…RVRG) and 521–541 (QLTP…NEGE). A phosphoserine mark is found at serine 166, serine 178, serine 181, and serine 182. Over residues 166–190 (SADEDAEKNEEDSEGSSDEDEDDDG) the composition is skewed to acidic residues. Residues 199–215 (KKSEAPSGDSRKFLKKE) are compositionally biased toward basic and acidic residues. Residues 216–229 (DEDEDSEESEDSEA) are compositionally biased toward acidic residues. The span at 260–277 (PTTEEDKKAAEKKREDKA) shows a compositional bias: basic and acidic residues. Residues 521–530 (QLTPPEGSSK) are compositionally biased toward polar residues. A Phosphothreonine modification is found at threonine 523. Lysine 642 carries the post-translational modification N6-acetyllysine. The region spanning 672 to 848 (FHLHINLELL…QTVVMHRTEP (177 aa)) is the PCI domain. The segment at 884–912 (FRDQKDGYRKNEGYMRRGGYRQQQSQTAY) is disordered. The segment covering 885–898 (RDQKDGYRKNEGYM) has biased composition (basic and acidic residues). The residue at position 908 (serine 908) is a Phosphoserine.

This sequence belongs to the eIF-3 subunit C family. As to quaternary structure, component of the eukaryotic translation initiation factor 3 (eIF-3) complex, which is composed of 13 subunits: EIF3A, EIF3B, EIF3C, EIF3D, EIF3E, EIF3F, EIF3G, EIF3H, EIF3I, EIF3J, EIF3K, EIF3L and EIF3M. The eIF-3 complex appears to include 3 stable modules: module A is composed of EIF3A, EIF3B, EIF3G and EIF3I; module B is composed of EIF3F, EIF3H, and EIF3M; and module C is composed of EIF3C, EIF3D, EIF3E, EIF3K and EIF3L. EIF3C of module C binds EIF3B of module A and EIF3H of module B, thereby linking the three modules. EIF3J is a labile subunit that binds to the eIF-3 complex via EIF3B. The eIF-3 complex interacts with RPS6KB1 under conditions of nutrient depletion. Mitogenic stimulation leads to binding and activation of a complex composed of MTOR and RPTOR, leading to phosphorylation and release of RPS6KB1 and binding of EIF4B to eIF-3. Identified in a HCV IRES-mediated translation complex, at least composed of EIF3C, IGF2BP1, RPS3 and HCV RNA-replicon. Interacts with ALKBH4, IFIT1 and IFIT2. Interacts with BZW2/5MP1. Post-translationally, phosphorylated. Phosphorylation is enhanced upon serum stimulation.

It is found in the cytoplasm. Component of the eukaryotic translation initiation factor 3 (eIF-3) complex, which is required for several steps in the initiation of protein synthesis. The eIF-3 complex associates with the 40S ribosome and facilitates the recruitment of eIF-1, eIF-1A, eIF-2:GTP:methionyl-tRNAi and eIF-5 to form the 43S pre-initiation complex (43S PIC). The eIF-3 complex stimulates mRNA recruitment to the 43S PIC and scanning of the mRNA for AUG recognition. The eIF-3 complex is also required for disassembly and recycling of post-termination ribosomal complexes and subsequently prevents premature joining of the 40S and 60S ribosomal subunits prior to initiation. The eIF-3 complex specifically targets and initiates translation of a subset of mRNAs involved in cell proliferation, including cell cycling, differentiation and apoptosis, and uses different modes of RNA stem-loop binding to exert either translational activation or repression. This Bos taurus (Bovine) protein is Eukaryotic translation initiation factor 3 subunit C.